The chain runs to 519 residues: 2-isopropylmalate synthase (519 aa).

A Pyruvate carboxyltransferase domain is found at 12–274; it reads VVIFDTTLRD…WCNVESTTLT (263 aa). 4 residues coordinate Mn(2+): Asp-21, His-209, His-211, and Asn-245. Residues 398-519 are regulatory domain; the sequence is RLVSLTVIAG…QREAPVAAAS (122 aa).

It belongs to the alpha-IPM synthase/homocitrate synthase family. LeuA type 1 subfamily. As to quaternary structure, homodimer. Requires Mn(2+) as cofactor.

It is found in the cytoplasm. The catalysed reaction is 3-methyl-2-oxobutanoate + acetyl-CoA + H2O = (2S)-2-isopropylmalate + CoA + H(+). Its pathway is amino-acid biosynthesis; L-leucine biosynthesis; L-leucine from 3-methyl-2-oxobutanoate: step 1/4. Functionally, catalyzes the condensation of the acetyl group of acetyl-CoA with 3-methyl-2-oxobutanoate (2-ketoisovalerate) to form 3-carboxy-3-hydroxy-4-methylpentanoate (2-isopropylmalate). This chain is 2-isopropylmalate synthase, found in Afipia carboxidovorans (strain ATCC 49405 / DSM 1227 / KCTC 32145 / OM5) (Oligotropha carboxidovorans).